The chain runs to 547 residues: Chaperonin GroEL (547 aa).

ATP-binding positions include 30–33 (TLGP), K51, 87–91 (DGTTT), G415, and D496.

It belongs to the chaperonin (HSP60) family. As to quaternary structure, forms a cylinder of 14 subunits composed of two heptameric rings stacked back-to-back. Interacts with the co-chaperonin GroES.

Its subcellular location is the cytoplasm. The enzyme catalyses ATP + H2O + a folded polypeptide = ADP + phosphate + an unfolded polypeptide.. Functionally, together with its co-chaperonin GroES, plays an essential role in assisting protein folding. The GroEL-GroES system forms a nano-cage that allows encapsulation of the non-native substrate proteins and provides a physical environment optimized to promote and accelerate protein folding. In Chlorobium limicola (strain DSM 245 / NBRC 103803 / 6330), this protein is Chaperonin GroEL.